Reading from the N-terminus, the 972-residue chain is Translation initiation factor IF-2 (972 aa).

A compositionally biased stretch (basic and acidic residues) spans 48-63 (DHLRKSHGATDGDKRK). 2 disordered regions span residues 48-85 (DHLR…KART) and 99-385 (RDDV…QAPT). Low complexity predominate over residues 105-114 (GAEQGQAQVA). Positions 121–181 (ELKRREEEAR…EEEAAAKRVA (61 aa)) are enriched in basic and acidic residues. Over residues 182 to 205 (AEAAAAQQQAAAQQAAAAEQQEAA) the composition is skewed to low complexity. The span at 212 to 263 (DEARAAAERAAQREAAKKAEDAAREAADKARAEQEEISKRRAAAEAEARAIR) shows a compositional bias: basic and acidic residues. Positions 279–288 (PPKPVEPPKP) are enriched in pro residues. Residues 313–328 (PAGAAAPATTAPAGAG) are compositionally biased toward low complexity. A compositionally biased stretch (gly residues) spans 357–370 (SSGGVDRGWRGGPK). The tr-type G domain maps to 472–641 (PRPPVVTVMG…LLQAEVLELK (170 aa)). The segment at 481–488 (GHVDHGKT) is G1. Residue 481 to 488 (GHVDHGKT) coordinates GTP. The segment at 506–510 (GITQH) is G2. The G3 stretch occupies residues 527–530 (DTPG). GTP is bound by residues 527 to 531 (DTPGH) and 581 to 584 (NKID). Residues 581–584 (NKID) form a G4 region. Residues 617–619 (SAK) are G5.

The protein belongs to the TRAFAC class translation factor GTPase superfamily. Classic translation factor GTPase family. IF-2 subfamily.

It is found in the cytoplasm. Functionally, one of the essential components for the initiation of protein synthesis. Protects formylmethionyl-tRNA from spontaneous hydrolysis and promotes its binding to the 30S ribosomal subunits. Also involved in the hydrolysis of GTP during the formation of the 70S ribosomal complex. The chain is Translation initiation factor IF-2 from Burkholderia lata (strain ATCC 17760 / DSM 23089 / LMG 22485 / NCIMB 9086 / R18194 / 383).